The chain runs to 136 residues: Small ribosomal subunit protein eS6 (136 aa).

Belongs to the eukaryotic ribosomal protein eS6 family.

This is Small ribosomal subunit protein eS6 from Methanosarcina mazei (strain ATCC BAA-159 / DSM 3647 / Goe1 / Go1 / JCM 11833 / OCM 88) (Methanosarcina frisia).